We begin with the raw amino-acid sequence, 221 residues long: tRNA (guanine-N(7)-)-methyltransferase (221 aa).

E46, D71, and D120 together coordinate S-adenosyl-L-methionine. The active site involves D120. D156 provides a ligand contact to substrate.

It belongs to the class I-like SAM-binding methyltransferase superfamily. TrmB family.

It catalyses the reaction guanosine(46) in tRNA + S-adenosyl-L-methionine = N(7)-methylguanosine(46) in tRNA + S-adenosyl-L-homocysteine. The protein operates within tRNA modification; N(7)-methylguanine-tRNA biosynthesis. Catalyzes the formation of N(7)-methylguanine at position 46 (m7G46) in tRNA. The polypeptide is tRNA (guanine-N(7)-)-methyltransferase (Cytophaga hutchinsonii (strain ATCC 33406 / DSM 1761 / CIP 103989 / NBRC 15051 / NCIMB 9469 / D465)).